The sequence spans 1240 residues: Selection and upkeep of intraepithelial T-cells protein 6 (1240 aa).

The signal sequence occupies residues 1–24 (MGTIGVPLTAHCVVLFLLQMVALS). Residues 25 to 1086 (TEQFTVNGLE…CNKRNPFWKK (1062 aa)) lie on the Extracellular side of the membrane. The 116-residue stretch at 26–141 (EQFTVNGLES…EEHIIEVKVT (116 aa)) folds into the Ig-like V-type domain. Cysteine 49 and cysteine 123 are joined by a disulfide. An Ig-like C1-type domain is found at 142–231 (ATSSDIQILM…FVTHQEESIS (90 aa)). N-linked (GlcNAc...) asparagine glycosylation is found at asparagine 155, asparagine 200, and asparagine 314. An intrachain disulfide couples cysteine 163 to cysteine 217. A helical transmembrane segment spans residues 1087–1107 (HALDLGISVFAIIVVTLIRHL). Topologically, residues 1108–1125 (NQREADQHFELDTLWSKD) are cytoplasmic. Residues 1126 to 1146 (TSVILCVLIMFNNRLKALIYF) form a helical membrane-spanning segment. The Extracellular segment spans residues 1147–1167 (RLYGYSPPGKTYKYIVNYILR). The chain crosses the membrane as a helical span at residues 1168 to 1188 (FSQPLFFIVYSAIILVMHLQI). Residues 1189–1205 (QNTDSLFSLYNSWMVEM) lie on the Cytoplasmic side of the membrane. The helical transmembrane segment at 1206 to 1226 (IMVLGLLLAIFNVKNIATALL) threads the bilayer. Residues 1227–1240 (HLGRTTLRLFRIKD) lie on the Extracellular side of the membrane.

The protein belongs to the SKINT family. Expressed in skin.

The protein localises to the membrane. Its function is as follows. May act by engaging a cell surface molecule on immature T-cells in the embryonic thymus. The chain is Selection and upkeep of intraepithelial T-cells protein 6 (Skint6) from Mus musculus (Mouse).